A 217-amino-acid polypeptide reads, in one-letter code: Protein-L-isoaspartate O-methyltransferase (217 aa).

The active site involves serine 59.

Belongs to the methyltransferase superfamily. L-isoaspartyl/D-aspartyl protein methyltransferase family.

It is found in the cytoplasm. It carries out the reaction [protein]-L-isoaspartate + S-adenosyl-L-methionine = [protein]-L-isoaspartate alpha-methyl ester + S-adenosyl-L-homocysteine. Catalyzes the methyl esterification of L-isoaspartyl residues in peptides and proteins that result from spontaneous decomposition of normal L-aspartyl and L-asparaginyl residues. It plays a role in the repair and/or degradation of damaged proteins. The polypeptide is Protein-L-isoaspartate O-methyltransferase (pcm) (Methanothermobacter thermautotrophicus (strain ATCC 29096 / DSM 1053 / JCM 10044 / NBRC 100330 / Delta H) (Methanobacterium thermoautotrophicum)).